Reading from the N-terminus, the 208-residue chain is Uracil phosphoribosyltransferase (208 aa).

Residues Arg78, Arg103, and 130 to 138 (DPMLATGGS) each bind 5-phospho-alpha-D-ribose 1-diphosphate. Uracil contacts are provided by residues Ile193 and 198–200 (GDA). Residue Asp199 coordinates 5-phospho-alpha-D-ribose 1-diphosphate.

It belongs to the UPRTase family. Mg(2+) is required as a cofactor.

It catalyses the reaction UMP + diphosphate = 5-phospho-alpha-D-ribose 1-diphosphate + uracil. It functions in the pathway pyrimidine metabolism; UMP biosynthesis via salvage pathway; UMP from uracil: step 1/1. With respect to regulation, allosterically activated by GTP. Catalyzes the conversion of uracil and 5-phospho-alpha-D-ribose 1-diphosphate (PRPP) to UMP and diphosphate. The polypeptide is Uracil phosphoribosyltransferase (Acholeplasma laidlawii (strain PG-8A)).